Reading from the N-terminus, the 330-residue chain is ADP-L-glycero-D-manno-heptose-6-epimerase (330 aa).

Residues 11–12 (FI), 32–33 (DN), Lys39, Lys54, 75–79 (EGACS), and Asn92 each bind NADP(+). The active-site Proton acceptor is the Tyr139. An NADP(+)-binding site is contributed by Lys143. Residue Asn168 coordinates substrate. Positions 169 and 177 each coordinate NADP(+). The Proton acceptor role is filled by Lys177. Substrate-binding positions include Arg179, His186, 200–203 (FGEY), Arg213, and Tyr292.

The protein belongs to the NAD(P)-dependent epimerase/dehydratase family. HldD subfamily. As to quaternary structure, homopentamer. It depends on NADP(+) as a cofactor.

It carries out the reaction ADP-D-glycero-beta-D-manno-heptose = ADP-L-glycero-beta-D-manno-heptose. The protein operates within nucleotide-sugar biosynthesis; ADP-L-glycero-beta-D-manno-heptose biosynthesis; ADP-L-glycero-beta-D-manno-heptose from D-glycero-beta-D-manno-heptose 7-phosphate: step 4/4. Its function is as follows. Catalyzes the interconversion between ADP-D-glycero-beta-D-manno-heptose and ADP-L-glycero-beta-D-manno-heptose via an epimerization at carbon 6 of the heptose. The chain is ADP-L-glycero-D-manno-heptose-6-epimerase from Burkholderia ambifaria (strain ATCC BAA-244 / DSM 16087 / CCUG 44356 / LMG 19182 / AMMD) (Burkholderia cepacia (strain AMMD)).